A 347-amino-acid polypeptide reads, in one-letter code: Methylthioribose-1-phosphate isomerase (347 aa).

Substrate contacts are provided by residues 46–48 (RGA), R89, and Q196. The Proton donor role is filled by D237. 247 to 248 (NK) serves as a coordination point for substrate.

Belongs to the eIF-2B alpha/beta/delta subunits family. MtnA subfamily.

It catalyses the reaction 5-(methylsulfanyl)-alpha-D-ribose 1-phosphate = 5-(methylsulfanyl)-D-ribulose 1-phosphate. The protein operates within amino-acid biosynthesis; L-methionine biosynthesis via salvage pathway; L-methionine from S-methyl-5-thio-alpha-D-ribose 1-phosphate: step 1/6. Catalyzes the interconversion of methylthioribose-1-phosphate (MTR-1-P) into methylthioribulose-1-phosphate (MTRu-1-P). This is Methylthioribose-1-phosphate isomerase from Chloroflexus aurantiacus (strain ATCC 29366 / DSM 635 / J-10-fl).